Reading from the N-terminus, the 942-residue chain is Chitin synthase 2 (942 aa).

Over residues 1-13 (MAYHYSHDSDRRQ) the composition is skewed to basic and acidic residues. The tract at residues 1–132 (MAYHYSHDSD…PSHTDYSDED (132 aa)) is disordered. Positions 18–33 (YNYPSNYSNPSQYSIP) are enriched in low complexity. N23 carries an N-linked (GlcNAc...) asparagine glycan. Positions 71–80 (PQPTASSMTS) are enriched in polar residues. A glycan (N-linked (GlcNAc...) asparagine) is linked at N587. 4 helical membrane-spanning segments follow: residues 590-610 (IFAATYAMVCFWRIWTSGHGI), 625-645 (FNLLFNWLSVSSFYLAFFFLI), 663-683 (IFQVFNKVYIALIFVVLVCSL), and 696-716 (FCIFMFAVCQGILLYCAGWTV). N736 is a glycosylation site (N-linked (GlcNAc...) asparagine). The next 2 helical transmembrane spans lie at 739–759 (FVQLALSLMATYGLYLISSLL) and 770–790 (FVQYLLLLPSYVNILLIYAMC). The N-linked (GlcNAc...) asparagine glycan is linked to N803. Helical transmembrane passes span 873–893 (VVLLFLGSNMLIILLFTSSTF) and 916–936 (IFYAVLGLSALRFAGCLLYLI).

It belongs to the chitin synthase family. Class III subfamily.

The protein localises to the cell membrane. The enzyme catalyses [(1-&gt;4)-N-acetyl-beta-D-glucosaminyl](n) + UDP-N-acetyl-alpha-D-glucosamine = [(1-&gt;4)-N-acetyl-beta-D-glucosaminyl](n+1) + UDP + H(+). Polymerizes chitin, a structural polymer of the cell wall and septum, by transferring the sugar moiety of UDP-GlcNAc to the non-reducing end of the growing chitin polymer. This Cryptococcus neoformans var. grubii serotype A (strain H99 / ATCC 208821 / CBS 10515 / FGSC 9487) (Filobasidiella neoformans var. grubii) protein is Chitin synthase 2.